A 198-amino-acid chain; its full sequence is MSNVRVSNGSPSLERMDARQAEHPKPSACRNLFGPVDHEELTRDLEKHCRDMEEASQRKWNFDFQNHKPLEGKYEWQEVEKGSLPEFYYRPPRPPKGACKVPAQESQDVSGSRPAAPLIGAPANSEDTHLVDPKTDPSDSQTGLAEQCAGIRKRPATDDSSTQNKRANRTEENVSDGSPNAGSVEQTPKKPGLRRRQT.

Residues 1–11 are compositionally biased toward polar residues; that stretch reads MSNVRVSNGSP. Residues 1 to 34 form a disordered region; sequence MSNVRVSNGSPSLERMDARQAEHPKPSACRNLFG. Ser10 carries the post-translational modification Phosphoserine; by UHMK1. Positions 14–25 are enriched in basic and acidic residues; sequence ERMDARQAEHPK. The interval 51–91 is interaction with CDK2; the sequence is DMEEASQRKWNFDFQNHKPLEGKYEWQEVEKGSLPEFYYRP. Phosphotyrosine; by SRC is present on Tyr74. Residues 85 to 198 are disordered; that stretch reads PEFYYRPPRP…KKPGLRRRQT (114 aa). Position 88 is a phosphotyrosine; by ABL, LYN, SRC and JAK2 (Tyr88). Residue Tyr89 is modified to Phosphotyrosine. The segment covering 126 to 137 has biased composition (basic and acidic residues); that stretch reads EDTHLVDPKTDP. A Nuclear localization signal motif is present at residues 153-169; the sequence is KRPATDDSSTQNKRANR. Position 157 is a phosphothreonine; by CaMK1, PKB/AKT1 and PIM1 (Thr157). Phosphothreonine is present on Thr170. Polar residues predominate over residues 175–186; that stretch reads SDGSPNAGSVEQ. Residue Thr187 is modified to Phosphothreonine; by PKB/AKT1, CDK1 and CDK2. Residue Thr198 is modified to Phosphothreonine; by CaMK1, PKB/AKT1, RPS6KA1, RPS6KA3 and PIM1.

The protein belongs to the CDI family. As to quaternary structure, forms a ternary complex composed of CCNE1, CDK2 and CDKN1B. Interacts directly with CCNE1; the interaction is inhibited by CDK2-dependent phosphorylation on Thr-187. Interacts with COPS5, subunit of the COP9 signalosome complex; the interaction leads to CDKN1B degradation. Interacts with NUP50; the interaction leads to nuclear import and degradation of phosphorylated CDKN1B. Interacts with CCND1 and SNX6. Interacts (Thr-198-phosphorylated form) with 14-3-3 proteins, binds strongly YWHAQ, weakly YWHAE and YWHAH, but not YWHAB nor YWHAZ; the interaction with YWHAQ results in translocation to the cytoplasm. Interacts with AKT1 and LYN; the interactions lead to cytoplasmic mislocation, phosphorylation of CDKN1B and inhibition of cell cycle arrest. Forms a ternary complex with CCNA2 and CDK2; CDKN1B inhibits the kinase activity of CDK2 through conformational rearrangements. Interacts (unphosphorylated form) with CDK2. Forms a complex with CDK2 and SPDYA, but does not directly interact with SPDYA. Forms a ternary complex composed of cyclin D, CDK4 and CDKN1B. Interacts (phosphorylated on Tyr-88 and Tyr-89) with CDK4; the interaction is required for cyclin D and CDK4 complex assembly, induces nuclear translocation and activates the CDK4 kinase activity. Interacts with GRB2. Interacts with PIM1. Identified in a complex with SKP1, SKP2 and CKS1B. Interacts with UHMK1; the interaction leads to cytoplasmic mislocation, phosphorylation of CDKN1B and inhibition of cell cycle arrest. Also interacts with CDK1. Dephosphorylated on Thr-187 by PPM1H, leading to CDKN1B stability. Interacts with HSPA8; the interaction may be associated with susceptibility to ubiquitination. In terms of processing, phosphorylated; phosphorylation occurs on serine, threonine and tyrosine residues. Phosphorylation on Ser-10 is the major site of phosphorylation in resting cells, takes place at the G(0)-G(1) phase and leads to protein stability. Phosphorylation on other sites is greatly enhanced by mitogens, growth factors, cMYC and in certain cancer cell lines. The phosphorylated form found in the cytoplasm is inactivate. Phosphorylation on Thr-198 is required for interaction with 14-3-3 proteins. Phosphorylation on Thr-187, by CDK1 and CDK2 leads to protein ubiquitination and proteasomal degradation. Tyrosine phosphorylation promotes this process. Phosphorylation by PKB/AKT1 can be suppressed by LY294002, an inhibitor of the catalytic subunit of PI3K. Phosphorylation on Tyr-88 and Tyr-89 has no effect on binding CDK2, but is required for binding CDK4. Dephosphorylated on tyrosine residues by G-CSF. Post-translationally, ubiquitinated; in the cytoplasm by the KPC complex (composed of RNF123/KPC1 and UBAC1/KPC2) and, in the nucleus, by SCF(SKP2). The latter requires prior phosphorylation on Thr-187. Ubiquitinated; by a TRIM21-containing SCF(SKP2)-like complex; leads to its degradation. Subject to degradation in the lysosome. Interaction with SNX6 promotes lysosomal degradation. As to expression, expressed in kidney (at protein level). Expressed in all tissues tested. Highest levels in skeletal muscle, lowest in liver and kidney.

Its subcellular location is the nucleus. It localises to the cytoplasm. It is found in the endosome. In terms of biological role, important regulator of cell cycle progression. Inhibits the kinase activity of CDK2 bound to cyclin A, but has little inhibitory activity on CDK2 bound to SPDYA. Involved in G1 arrest. Potent inhibitor of cyclin E- and cyclin A-CDK2 complexes. Forms a complex with cyclin type D-CDK4 complexes and is involved in the assembly, stability, and modulation of CCND1-CDK4 complex activation. Acts either as an inhibitor or an activator of cyclin type D-CDK4 complexes depending on its phosphorylation state and/or stoichometry. The sequence is that of Cyclin-dependent kinase inhibitor 1B from Homo sapiens (Human).